Reading from the N-terminus, the 378-residue chain is MRVGAEYQARIPDFEPGATKYTDKDNGGMLVWSPYHNIPDAKLDEYIAIAKEKHGYNVEQALGMLFWHKHNIEKSLADLPNFTPFPDEWTVEDKVLFEQAFSFHGKSFHRIQQMLPDKTIASLVKYYYSWKKTRSRTSLMDRQARKLANRNNQGDSDDDVEEPHPMDGNDSDYDPKKEAKKEGNNEQPVQTSKIGLGRREYQSLQHRHHSQRSKCRPPKGMYLTQEDVIAVSCSPNAANTILRRLDMELISLKRQVQNAKQVNSALKQKMEGGIEEFKPPESNQKINARWTTEEQLLAVQGAKHSDHSVFRPFTSSTGICSSSHRSHSNFKSATPVTASSTSCCSCSPPSASAAPTTGAIYSAKANPKSASPTAHPPS.

The region spanning 1–83 (MRVGAEYQAR…KSLADLPNFT (83 aa)) is the ELM2 domain. An SANT domain is found at 84-135 (PFPDEWTVEDKVLFEQAFSFHGKSFHRIQQMLPDKTIASLVKYYYSWKKTRS). A disordered region spans residues 147 to 219 (LANRNNQGDS…SQRSKCRPPK (73 aa)). Over residues 162-184 (EPHPMDGNDSDYDPKKEAKKEGN) the composition is skewed to basic and acidic residues. Over residues 205-217 (QHRHHSQRSKCRP) the composition is skewed to basic residues. A coiled-coil region spans residues 238–273 (ANTILRRLDMELISLKRQVQNAKQVNSALKQKMEGG). The interval 337–356 (TASSTSCCSCSPPSASAAPT) is disordered.

This sequence belongs to the CoREST family.

The protein resides in the nucleus. Its function is as follows. May act as a component of a corepressor complex that represses transcription. The chain is REST corepressor 3 (RCOR3) from Gallus gallus (Chicken).